The chain runs to 166 residues: Probable chemoreceptor glutamine deamidase CheD (166 aa).

The protein belongs to the CheD family.

It carries out the reaction L-glutaminyl-[protein] + H2O = L-glutamyl-[protein] + NH4(+). Its function is as follows. Probably deamidates glutamine residues to glutamate on methyl-accepting chemotaxis receptors (MCPs), playing an important role in chemotaxis. In Oceanobacillus iheyensis (strain DSM 14371 / CIP 107618 / JCM 11309 / KCTC 3954 / HTE831), this protein is Probable chemoreceptor glutamine deamidase CheD.